The primary structure comprises 502 residues: Lysine--tRNA ligase (502 aa).

Mg(2+)-binding residues include E403 and E410.

This sequence belongs to the class-II aminoacyl-tRNA synthetase family. As to quaternary structure, homodimer. It depends on Mg(2+) as a cofactor.

It is found in the cytoplasm. The catalysed reaction is tRNA(Lys) + L-lysine + ATP = L-lysyl-tRNA(Lys) + AMP + diphosphate. In Parasynechococcus marenigrum (strain WH8102), this protein is Lysine--tRNA ligase.